Consider the following 353-residue polypeptide: 3-dehydroquinate synthase (353 aa).

NAD(+) is bound by residues 60 to 65 (AGDMNK), 94 to 98 (GMITD), 118 to 119 (TT), K131, and K140. Residues E173, H234, and H253 each contribute to the Zn(2+) site.

It belongs to the sugar phosphate cyclases superfamily. Dehydroquinate synthase family. NAD(+) serves as cofactor. Requires Co(2+) as cofactor. It depends on Zn(2+) as a cofactor.

The protein localises to the cytoplasm. It carries out the reaction 7-phospho-2-dehydro-3-deoxy-D-arabino-heptonate = 3-dehydroquinate + phosphate. Its pathway is metabolic intermediate biosynthesis; chorismate biosynthesis; chorismate from D-erythrose 4-phosphate and phosphoenolpyruvate: step 2/7. Functionally, catalyzes the conversion of 3-deoxy-D-arabino-heptulosonate 7-phosphate (DAHP) to dehydroquinate (DHQ). The polypeptide is 3-dehydroquinate synthase (Parabacteroides distasonis (strain ATCC 8503 / DSM 20701 / CIP 104284 / JCM 5825 / NCTC 11152)).